Consider the following 98-residue polypeptide: Integration host factor subunit alpha (98 aa).

Basic and acidic residues predominate over residues 53 to 69 (DLREKSERPGRNPKTGE). Residues 53 to 73 (DLREKSERPGRNPKTGEDIPI) are disordered.

The protein belongs to the bacterial histone-like protein family. As to quaternary structure, heterodimer of an alpha and a beta chain.

Its function is as follows. This protein is one of the two subunits of integration host factor, a specific DNA-binding protein that functions in genetic recombination as well as in transcriptional and translational control. The sequence is that of Integration host factor subunit alpha from Aliivibrio fischeri (strain ATCC 700601 / ES114) (Vibrio fischeri).